The sequence spans 352 residues: Protein MGF 360-9L (352 aa).

It belongs to the asfivirus MGF 360 family. Interacts with host STAT1; this interaction mediates STAT1 degradation through apoptosis. Interacts with host STAT2; this interaction mediates STAT2 degradation through the proteasome.

The protein localises to the host cytoplasm. Its function is as follows. Plays a role in virus cell tropism, and may be required for efficient virus replication in macrophages. In addition, inhibits IFN-beta-induced IFN-stimulated genes (ISGs) transcription. Mechanistically, degrades host STAT1 and STAT2 through apoptosis and ubiquitin-proteasome pathways respectively. This is Protein MGF 360-9L from Ornithodoros (relapsing fever ticks).